The following is a 367-amino-acid chain: Probable sugar phosphate/phosphate translocator At1g48230 (367 aa).

A run of 10 helical transmembrane segments spans residues 9-29 (LVLT…VILY), 43-63 (LPIT…FLLI), 76-96 (FEIY…SLWF), 106-126 (VAFI…MAVV), 140-160 (MVLV…FNVI), 163-183 (VYQV…QVLL), 193-213 (VTSL…PWYV), 229-249 (WIFF…FLVI), 257-276 (IRVA…TVIF), and 280-302 (TITG…YNYI). The span at 321–330 (ITKDWKEKNS) shows a compositional bias: basic and acidic residues. Residues 321–341 (ITKDWKEKNSSDGGSPRGLEL) form a disordered region.

The protein belongs to the TPT transporter family. TPT (TC 2.A.7.9) subfamily.

It localises to the membrane. The chain is Probable sugar phosphate/phosphate translocator At1g48230 from Arabidopsis thaliana (Mouse-ear cress).